We begin with the raw amino-acid sequence, 62 residues long: Photosystem II reaction center protein Z (62 aa).

A run of 2 helical transmembrane segments spans residues 8–28 (AVFALIATSSILLISVPVVFA) and 41–61 (FSGTSLWLGLVFLVGILNSLI).

Belongs to the PsbZ family. PSII is composed of 1 copy each of membrane proteins PsbA, PsbB, PsbC, PsbD, PsbE, PsbF, PsbH, PsbI, PsbJ, PsbK, PsbL, PsbM, PsbT, PsbY, PsbZ, Psb30/Ycf12, at least 3 peripheral proteins of the oxygen-evolving complex and a large number of cofactors. It forms dimeric complexes.

It localises to the plastid. The protein resides in the chloroplast thylakoid membrane. In terms of biological role, may control the interaction of photosystem II (PSII) cores with the light-harvesting antenna, regulates electron flow through the 2 photosystem reaction centers. PSII is a light-driven water plastoquinone oxidoreductase, using light energy to abstract electrons from H(2)O, generating a proton gradient subsequently used for ATP formation. This is Photosystem II reaction center protein Z from Spinacia oleracea (Spinach).